Here is a 105-residue protein sequence, read N- to C-terminus: Thioredoxin (105 aa).

The region spanning 2–105 (VKLIESKEAF…KLEASITEYA (104 aa)) is the Thioredoxin domain. Lys3 carries the N6-acetyllysine modification. An N6-succinyllysine modification is found at Lys8. Residues Cys32 and Cys35 each act as nucleophile in the active site. Cys32 and Cys35 are oxidised to a cystine. At Lys39 the chain carries N6-acetyllysine. S-nitrosocysteine is present on residues Cys62 and Cys69. S-nitrosocysteine; alternate is present on Cys73. Residue Lys94 is modified to N6-acetyllysine; alternate. An N6-succinyllysine; alternate modification is found at Lys94.

It belongs to the thioredoxin family. As to quaternary structure, homodimer; disulfide-linked. Interacts with TXNIP through the redox-active site. Interacts with MAP3K5 and CASP3. Interacts with APEX1; the interaction stimulates the FOS/JUN AP-1 DNA-binding activity in a redox-dependent manner. In the fully reduced protein, both Cys-69 and Cys-73 are nitrosylated in response to nitric oxide (NO). When two disulfide bonds are present in the protein, only Cys-73 is nitrosylated. Cys-73 can serve as donor for nitrosylation of target proteins.

It localises to the nucleus. Its subcellular location is the cytoplasm. The protein resides in the secreted. In terms of biological role, participates in various redox reactions through the reversible oxidation of its active center dithiol to a disulfide and catalyzes dithiol-disulfide exchange reactions. Plays a role in the reversible S-nitrosylation of cysteine residues in target proteins, and thereby contributes to the response to intracellular nitric oxide. Nitrosylates the active site Cys of CASP3 in response to nitric oxide (NO), and thereby inhibits caspase-3 activity. Induces the FOS/JUN AP-1 DNA binding activity in ionizing radiation (IR) cells through its oxidation/reduction status and stimulates AP-1 transcriptional activity. Its function is as follows. ADF augments the expression of the interleukin-2 receptor TAC (IL2R/P55). This Mus musculus (Mouse) protein is Thioredoxin (Txn).